Here is a 274-residue protein sequence, read N- to C-terminus: Penicillin-insensitive murein endopeptidase (274 aa).

A signal peptide spans 1–19 (MKKTAIALLAWFVSSASLA). 3 disulfide bridges follow: Cys-44–Cys-265, Cys-187–Cys-235, and Cys-216–Cys-223. Zn(2+)-binding residues include His-110, His-113, Asp-120, Asp-147, His-150, and His-211. A disordered region spans residues 225 to 274 (DQPLPPPGDGCGAELQSWFEPPKPGTTKPEKKTPPPLPPSCQALLDEHVL).

This sequence belongs to the peptidase M74 family. Dimer. Requires Zn(2+) as cofactor.

It is found in the periplasm. Functionally, murein endopeptidase that cleaves the D-alanyl-meso-2,6-diamino-pimelyl amide bond that connects peptidoglycan strands. Likely plays a role in the removal of murein from the sacculus. The protein is Penicillin-insensitive murein endopeptidase of Salmonella paratyphi A (strain AKU_12601).